Here is a 259-residue protein sequence, read N- to C-terminus: Complement factor D (259 aa).

The N-terminal stretch at 1-21 is a signal peptide; the sequence is MADRSLHLVVLILLGTALCAA. Residues 22-26 constitute a propeptide, activation peptide; it reads QPRGR. The Peptidase S1 domain maps to 27–254; that stretch reads ILRGQEAPSH…YVAWIDGVMA (228 aa). A disulfide bridge links C52 with C68. Active-site charge relay system residues include H67 and D115. 3 disulfide bridges follow: C149/C215, C180/C196, and C205/C230. S209 functions as the Charge relay system in the catalytic mechanism. The segment at 224-228 is self-inhibitor loop; the sequence is TSGSR.

Belongs to the peptidase S1 family. In terms of processing, CFD is activated by the removal of 5 residues at the N-terminus, named activation peptide, by the MASP-3 isoform of MASP1.

Its subcellular location is the secreted. It catalyses the reaction Selective cleavage of Arg-|-Lys bond in complement factor B when in complex with complement subcomponent C3b or with cobra venom factor.. Its activity is regulated as follows. Circulates in plasma in a mature but self-inhibited form. Activated by factor B (CFB), which displaces the self-inhibition loop. Associates with CFB complexed with complement C3b. Functionally, serine protease that initiates the alternative pathway of the complement system, a cascade of proteins that leads to phagocytosis and breakdown of pathogens and signaling that strengthens the adaptive immune system. In contrast to other complement pathways (classical, lectin and GZMK) that are directly activated by pathogens or antigen-antibody complexes, the alternative complement pathway is initiated by the spontaneous hydrolysis of complement C3. The alternative complement pathway acts as an amplification loop that enhances complement activation by mediating the formation of C3 and C5 convertases. Activated CFD cleaves factor B (CFB) when the latter is complexed with complement C3b, activating the C3 convertase of the alternative pathway. The chain is Complement factor D (CFD) from Bos taurus (Bovine).